The primary structure comprises 315 residues: MITTSPQHVSVLLEESIEALATDPQGTYIDATFGRGGHTRALLNQLGDDARVIALDQDPEAIAAAAAFADDPRFQIIHTPFSNLQQVLDDLQLNRQVTGILFDLGVSSPQLDDAERGFSFMRDGPLDMRMNTTSGETAAEWLNRAEKDDISWVLKEYGEERFARRIASAIVMDREKKPFTRTKQLAEMIARVSPVKEKHKHPATRTFQAIRIHINRELEQIEQALEASLSGLKEDGRLVVISFHSLEDRLVKRFIRKHSEGKQLPPGLPVTEAERNKDKALEKVGKAIKPGKAEVQLNPRSRSSVLRIARRVRND.

S-adenosyl-L-methionine is bound by residues 36–38, Asp56, Phe81, Asp103, and Gln110; that span reads GGH.

This sequence belongs to the methyltransferase superfamily. RsmH family.

It is found in the cytoplasm. The catalysed reaction is cytidine(1402) in 16S rRNA + S-adenosyl-L-methionine = N(4)-methylcytidine(1402) in 16S rRNA + S-adenosyl-L-homocysteine + H(+). Its function is as follows. Specifically methylates the N4 position of cytidine in position 1402 (C1402) of 16S rRNA. The polypeptide is Ribosomal RNA small subunit methyltransferase H (Idiomarina loihiensis (strain ATCC BAA-735 / DSM 15497 / L2-TR)).